The chain runs to 82 residues: Small ribosomal subunit protein bS16 (82 aa).

It belongs to the bacterial ribosomal protein bS16 family.

The sequence is that of Small ribosomal subunit protein bS16 from Cyanothece sp. (strain PCC 7425 / ATCC 29141).